The sequence spans 384 residues: S-adenosylmethionine synthase (384 aa).

His-15 contributes to the ATP binding site. Asp-17 provides a ligand contact to Mg(2+). Glu-43 provides a ligand contact to K(+). L-methionine contacts are provided by Glu-56 and Gln-99. The tract at residues 99–109 (QSPDINQGVDR) is flexible loop. ATP is bound by residues 164–166 (DAK), 230–231 (RF), Asp-239, 245–246 (RK), Ala-262, and Lys-266. An L-methionine-binding site is contributed by Asp-239. Lys-270 contributes to the L-methionine binding site.

The protein belongs to the AdoMet synthase family. As to quaternary structure, homotetramer; dimer of dimers. Mg(2+) is required as a cofactor. Requires K(+) as cofactor.

It localises to the cytoplasm. The enzyme catalyses L-methionine + ATP + H2O = S-adenosyl-L-methionine + phosphate + diphosphate. It functions in the pathway amino-acid biosynthesis; S-adenosyl-L-methionine biosynthesis; S-adenosyl-L-methionine from L-methionine: step 1/1. Catalyzes the formation of S-adenosylmethionine (AdoMet) from methionine and ATP. The overall synthetic reaction is composed of two sequential steps, AdoMet formation and the subsequent tripolyphosphate hydrolysis which occurs prior to release of AdoMet from the enzyme. The sequence is that of S-adenosylmethionine synthase from Shigella boydii serotype 18 (strain CDC 3083-94 / BS512).